A 50-amino-acid chain; its full sequence is HLRNHFGSKPFKCNKCNYACVNKSMLNSHMKSHTNVYQYRCADCTYATKY.

3 C2H2-type zinc fingers span residues 1-5, 11-33, and 39-50; these read HLRNH, FKCN…MKSH, and YRCADCTYATKY.

Belongs to the hunchback C2H2-type zinc-finger protein family.

The protein localises to the nucleus. In terms of biological role, gap class segmentation protein that controls development of head structures. This chain is Protein hunchback (hb), found in Platynereis dumerilii (Dumeril's clam worm).